The sequence spans 309 residues: tRNA uridine(34) hydroxylase (309 aa).

A Rhodanese domain is found at 130–224 (SDPDTIVIDT…YLEEVPQEES (95 aa)). The active-site Cysteine persulfide intermediate is the C184.

It belongs to the TrhO family.

It carries out the reaction uridine(34) in tRNA + AH2 + O2 = 5-hydroxyuridine(34) in tRNA + A + H2O. In terms of biological role, catalyzes oxygen-dependent 5-hydroxyuridine (ho5U) modification at position 34 in tRNAs. This chain is tRNA uridine(34) hydroxylase, found in Rhizobium leguminosarum bv. trifolii (strain WSM2304).